The primary structure comprises 266 residues: 4-hydroxy-tetrahydrodipicolinate reductase (266 aa).

10-15 (GPRGRM) is an NAD(+) binding site. Lys-38 is an NADP(+) binding site. Residues 99–101 (GTT) and 125–128 (APNF) each bind NAD(+). Catalysis depends on His-155, which acts as the Proton donor/acceptor. Residue His-156 participates in (S)-2,3,4,5-tetrahydrodipicolinate binding. Lys-159 functions as the Proton donor in the catalytic mechanism. (S)-2,3,4,5-tetrahydrodipicolinate is bound at residue 165–166 (GT).

Belongs to the DapB family.

Its subcellular location is the cytoplasm. It catalyses the reaction (S)-2,3,4,5-tetrahydrodipicolinate + NAD(+) + H2O = (2S,4S)-4-hydroxy-2,3,4,5-tetrahydrodipicolinate + NADH + H(+). The catalysed reaction is (S)-2,3,4,5-tetrahydrodipicolinate + NADP(+) + H2O = (2S,4S)-4-hydroxy-2,3,4,5-tetrahydrodipicolinate + NADPH + H(+). It functions in the pathway amino-acid biosynthesis; L-lysine biosynthesis via DAP pathway; (S)-tetrahydrodipicolinate from L-aspartate: step 4/4. Functionally, catalyzes the conversion of 4-hydroxy-tetrahydrodipicolinate (HTPA) to tetrahydrodipicolinate. In Bacillus cereus (strain Q1), this protein is 4-hydroxy-tetrahydrodipicolinate reductase.